Here is a 230-residue protein sequence, read N- to C-terminus: 7-cyano-7-deazaguanine synthase (230 aa).

Position 9–19 (tyrosine 9–leucine 19) interacts with ATP. Positions 190, 200, 203, and 206 each coordinate Zn(2+).

This sequence belongs to the QueC family. Zn(2+) is required as a cofactor.

The catalysed reaction is 7-carboxy-7-deazaguanine + NH4(+) + ATP = 7-cyano-7-deazaguanine + ADP + phosphate + H2O + H(+). The protein operates within purine metabolism; 7-cyano-7-deazaguanine biosynthesis. In terms of biological role, catalyzes the ATP-dependent conversion of 7-carboxy-7-deazaguanine (CDG) to 7-cyano-7-deazaguanine (preQ(0)). The chain is 7-cyano-7-deazaguanine synthase from Syntrophotalea carbinolica (strain DSM 2380 / NBRC 103641 / GraBd1) (Pelobacter carbinolicus).